Here is a 409-residue protein sequence, read N- to C-terminus: Glutamyl-tRNA reductase (409 aa).

Residues 46–49 (TCNR), Ser-88, 93–95 (ENE), and Gln-99 each bind substrate. The Nucleophile role is filled by Cys-47. 164–169 (GNGMIA) contributes to the NADP(+) binding site.

The protein belongs to the glutamyl-tRNA reductase family. In terms of assembly, homodimer.

It catalyses the reaction (S)-4-amino-5-oxopentanoate + tRNA(Glu) + NADP(+) = L-glutamyl-tRNA(Glu) + NADPH + H(+). It participates in porphyrin-containing compound metabolism; protoporphyrin-IX biosynthesis; 5-aminolevulinate from L-glutamyl-tRNA(Glu): step 1/2. Catalyzes the NADPH-dependent reduction of glutamyl-tRNA(Glu) to glutamate 1-semialdehyde (GSA). This is Glutamyl-tRNA reductase from Thermoplasma acidophilum (strain ATCC 25905 / DSM 1728 / JCM 9062 / NBRC 15155 / AMRC-C165).